The sequence spans 180 residues: SPbeta prophage-derived uncharacterized protein YosC (180 aa).

This Bacillus subtilis (strain 168) protein is SPbeta prophage-derived uncharacterized protein YosC (yosC).